The following is a 126-amino-acid chain: MPTINQLIRKPRARLTVKSKSPAMQNSPQRRGVCTRVYTTTPKKPNSALRKVAKVRLTNGFEVISYIGGEGHNLQEHSVVLIRGGRVKDLPGVRYHIVRGSLDLQGVKDRKQARSKYGAKRAKKAA.

Position 89 is a 3-methylthioaspartic acid (D89).

Belongs to the universal ribosomal protein uS12 family. Part of the 30S ribosomal subunit. Contacts proteins S8 and S17. May interact with IF1 in the 30S initiation complex.

With S4 and S5 plays an important role in translational accuracy. Its function is as follows. Interacts with and stabilizes bases of the 16S rRNA that are involved in tRNA selection in the A site and with the mRNA backbone. Located at the interface of the 30S and 50S subunits, it traverses the body of the 30S subunit contacting proteins on the other side and probably holding the rRNA structure together. The combined cluster of proteins S8, S12 and S17 appears to hold together the shoulder and platform of the 30S subunit. This chain is Small ribosomal subunit protein uS12, found in Polynucleobacter necessarius subsp. necessarius (strain STIR1).